Consider the following 336-residue polypeptide: MKLAVIAGDGIGPEVIGEALRVLDAVVPGVEKTEYDLGARLYHRTGEVLPDSVLDELKGHDAILLGAIGDPSMPSGVLERGLLLRIRFELDHHINLRPGRLYPGVQSPLAGNPEIDFVVVREGTEGPYTGNGGAIRVGTPHEIATEVSVNTAYGVRRVVQDAFKRAQQRRKHLTLVHKNNVLTNAGSLWWRTVQAVAAEYPEVEVAYQHVDAATIHMVTDPGRFDVIVTDNLFGDIITDLAAAVCGGIGLAASGNIDATLTNPSMFEPVHGSAPDIAGQGIADPTAAIMSVSLLLAHMAEIDAAARVDKAVAEHLATRGDEKLSTTQVGDRILGKL.

Arg-87, Arg-97, Arg-121, and Asp-211 together coordinate substrate. 3 residues coordinate Mg(2+): Asp-211, Asp-235, and Asp-239. 271 to 283 (GSAPDIAGQGIAD) serves as a coordination point for NAD(+).

The protein belongs to the isocitrate and isopropylmalate dehydrogenases family. LeuB type 2 subfamily. In terms of assembly, homodimer. It depends on Mg(2+) as a cofactor. Mn(2+) is required as a cofactor.

It localises to the cytoplasm. The catalysed reaction is (2R,3S)-3-isopropylmalate + NAD(+) = 4-methyl-2-oxopentanoate + CO2 + NADH. It participates in amino-acid biosynthesis; L-leucine biosynthesis; L-leucine from 3-methyl-2-oxobutanoate: step 3/4. Its function is as follows. Catalyzes the oxidation of 3-carboxy-2-hydroxy-4-methylpentanoate (3-isopropylmalate) to 3-carboxy-4-methyl-2-oxopentanoate. The product decarboxylates to 4-methyl-2 oxopentanoate. The polypeptide is 3-isopropylmalate dehydrogenase (Mycolicibacterium gilvum (strain PYR-GCK) (Mycobacterium gilvum (strain PYR-GCK))).